A 280-amino-acid chain; its full sequence is Acetyl-coenzyme A carboxylase carboxyl transferase subunit beta (280 aa).

The CoA carboxyltransferase N-terminal domain maps to 24 to 280 (AWIKCDKCKN…IYTLIRHTHG (257 aa)). Zn(2+) contacts are provided by cysteine 28, cysteine 31, cysteine 47, and cysteine 50. The C4-type zinc-finger motif lies at 28–50 (CDKCKNILYIEDLLKNLKICPHC).

Belongs to the AccD/PCCB family. In terms of assembly, acetyl-CoA carboxylase is a heterohexamer composed of biotin carboxyl carrier protein (AccB), biotin carboxylase (AccC) and two subunits each of ACCase subunit alpha (AccA) and ACCase subunit beta (AccD). Requires Zn(2+) as cofactor.

It is found in the cytoplasm. It catalyses the reaction N(6)-carboxybiotinyl-L-lysyl-[protein] + acetyl-CoA = N(6)-biotinyl-L-lysyl-[protein] + malonyl-CoA. It functions in the pathway lipid metabolism; malonyl-CoA biosynthesis; malonyl-CoA from acetyl-CoA: step 1/1. Component of the acetyl coenzyme A carboxylase (ACC) complex. Biotin carboxylase (BC) catalyzes the carboxylation of biotin on its carrier protein (BCCP) and then the CO(2) group is transferred by the transcarboxylase to acetyl-CoA to form malonyl-CoA. This is Acetyl-coenzyme A carboxylase carboxyl transferase subunit beta from Sulfurihydrogenibium sp. (strain YO3AOP1).